Reading from the N-terminus, the 88-residue chain is UPF0335 protein MexAM1_META1p2947 (88 aa).

The protein belongs to the UPF0335 family.

This is UPF0335 protein MexAM1_META1p2947 from Methylorubrum extorquens (strain ATCC 14718 / DSM 1338 / JCM 2805 / NCIMB 9133 / AM1) (Methylobacterium extorquens).